A 329-amino-acid chain; its full sequence is DNA-directed RNA polymerase subunit alpha (329 aa).

Residues 1-235 (MQGSVIEFLK…EQLDAFVDLR (235 aa)) form an alpha N-terminal domain (alpha-NTD) region. The segment at 249-329 (FDPILLRPVD…NWPPASIAED (81 aa)) is alpha C-terminal domain (alpha-CTD).

Belongs to the RNA polymerase alpha chain family. In terms of assembly, homodimer. The RNAP catalytic core consists of 2 alpha, 1 beta, 1 beta' and 1 omega subunit. When a sigma factor is associated with the core the holoenzyme is formed, which can initiate transcription.

It carries out the reaction RNA(n) + a ribonucleoside 5'-triphosphate = RNA(n+1) + diphosphate. DNA-dependent RNA polymerase catalyzes the transcription of DNA into RNA using the four ribonucleoside triphosphates as substrates. The protein is DNA-directed RNA polymerase subunit alpha of Haemophilus ducreyi (strain 35000HP / ATCC 700724).